Consider the following 60-residue polypeptide: Prokaryotic ubiquitin-like protein UBact (60 aa).

Residues 1–60 (MPERKTQPTTDQPWTKPNDGGDESGPRSPEVERPNTRDLLERMKRVDPRQARRYRQRSGE) are disordered. A compositionally biased stretch (basic and acidic residues) spans 29 to 50 (PEVERPNTRDLLERMKRVDPRQ). Residues 51–60 (ARRYRQRSGE) show a composition bias toward basic residues. Residue Glu-60 forms an Isoglutamyl lysine isopeptide (Glu-Lys) (interchain with K-? in acceptor proteins) linkage.

It belongs to the ubiquitin-like protein UBact family.

In terms of biological role, may function as a protein modifier covalently attached to lysine residues of substrate proteins. This may serve to target the modified proteins for degradation by proteasomes. The chain is Prokaryotic ubiquitin-like protein UBact from Fraserbacteria sp. (strain RBG_16_55_9).